The following is a 175-amino-acid chain: MSKVASAAGKAIDWASVASKLKLDAATASAIANFRSRHAQAVAKLGTLREQATTVDFATYRSVLANKEIVNRIESSMKSFKPVKIDLNSQLKAINAFEAKASEGAKKNVELVKAELQNLSATLKNIEQARPTEEITIEDMKQAVPEIEKIVETMVTKGKWVIPGYREKFGDLSIM.

Ser-2 carries the N-acetylserine modification.

It belongs to the ATPase d subunit family.

The protein localises to the mitochondrion inner membrane. Its function is as follows. Mitochondrial membrane ATP synthase (F(1)F(0) ATP synthase or Complex V) produces ATP from ADP in the presence of a proton gradient across the membrane which is generated by electron transport complexes of the respiratory chain. F-type ATPases consist of two structural domains, F(1) - containing the extramembraneous catalytic core, and F(0) - containing the membrane proton channel, linked together by a central stalk and a peripheral stalk. During catalysis, ATP synthesis in the catalytic domain of F(1) is coupled via a rotary mechanism of the central stalk subunits to proton translocation. Part of the complex F(0) domain and the peripheric stalk, which acts as a stator to hold the catalytic alpha(3)beta(3) subcomplex and subunit a/ATP6 static relative to the rotary elements. This Schizosaccharomyces pombe (strain 972 / ATCC 24843) (Fission yeast) protein is ATP synthase subunit d, mitochondrial (atp7).